The primary structure comprises 256 residues: Isoprenyl transferase (256 aa).

Asp33 is a catalytic residue. A Mg(2+)-binding site is contributed by Asp33. Residues 34-37, Trp38, Arg46, His50, and 78-80 each bind substrate; these read GNGR and STE. The Proton acceptor role is filled by Asn81. Substrate is bound by residues Trp82, Arg84, Arg201, and 207 to 209; that span reads RIS. Glu220 is a binding site for Mg(2+).

This sequence belongs to the UPP synthase family. Homodimer. The cofactor is Mg(2+).

Catalyzes the condensation of isopentenyl diphosphate (IPP) with allylic pyrophosphates generating different type of terpenoids. The protein is Isoprenyl transferase of Staphylococcus aureus (strain Mu50 / ATCC 700699).